We begin with the raw amino-acid sequence, 857 residues long: Protein STICHEL-like 2 (857 aa).

280–287 lines the ATP pocket; the sequence is GPRGTGKT. Zn(2+) contacts are provided by Cys299, Cys309, Cys312, and Cys315. Residues 544–576 adopt a coiled-coil conformation; it reads LTRHTSEEEMQKLRNALKILSDAEKHLRASKNQ. Disordered regions lie at residues 593–629 and 787–845; these read SSFA…DAEK and ASSR…SSRL. Positions 599–610 are enriched in basic and acidic residues; sequence ENGRNQINKDVE. Polar residues predominate over residues 834–843; the sequence is QSETQNSKSS.

It belongs to the DnaX/STICHEL family.

In Arabidopsis thaliana (Mouse-ear cress), this protein is Protein STICHEL-like 2.